We begin with the raw amino-acid sequence, 323 residues long: MNKVEIAGLGSYVPPKILDNNDLSLIVDTNDEWIRCRTGIRQRRISQGENTSEMATKAAINAMKSANIKAEDIDLIVVATITPDNFIPSTACIVQKNIKAVNATCFDISAACSGLIYGLDIGTQFIRSGRFKVVLAIGAETLSKILNWQDRSTCILFGDGAAAAILQMGEEESILSMYTGSDGFQGDALTCPAVPVNNPCTTSDFQKSVVTMDGKAIFKFAVKILVKSVKMLLKEQEVTLEEIKYIIPHQANYRIIECAAKILKVDIDKFYINLDLYGNTSAASVGIALDEVYKKNLVEKGDKVLIIGFGGGLTYGGLLINVI.

Residues C112 and H249 contribute to the active site. The tract at residues 250–254 (QANYR) is ACP-binding. N279 is an active-site residue.

Belongs to the thiolase-like superfamily. FabH family. As to quaternary structure, homodimer.

The protein resides in the cytoplasm. It catalyses the reaction malonyl-[ACP] + acetyl-CoA + H(+) = 3-oxobutanoyl-[ACP] + CO2 + CoA. It functions in the pathway lipid metabolism; fatty acid biosynthesis. In terms of biological role, catalyzes the condensation reaction of fatty acid synthesis by the addition to an acyl acceptor of two carbons from malonyl-ACP. Catalyzes the first condensation reaction which initiates fatty acid synthesis and may therefore play a role in governing the total rate of fatty acid production. Possesses both acetoacetyl-ACP synthase and acetyl transacylase activities. Its substrate specificity determines the biosynthesis of branched-chain and/or straight-chain of fatty acids. This Clostridium kluyveri (strain NBRC 12016) protein is Beta-ketoacyl-[acyl-carrier-protein] synthase III.